Reading from the N-terminus, the 1790-residue chain is Atrochrysone carboxylic acid synthase (1790 aa).

An N-terminal acylcarrier protein transacylase domain (SAT) region spans residues 27-265; that stretch reads RDLQDLFRQA…ALPVYGGLCH (239 aa). The region spanning 399–833 is the Ketosynthase family 3 (KS3) domain; sequence QSKLAIVGMS…GGNTTMILED (435 aa). Catalysis depends on for beta-ketoacyl synthase activity residues Cys-572, His-708, and His-751. Positions 934-1254 are malonyl-CoA:ACP transacylase (MAT) domain; it reads FSFTGQGASH…IAQLYTVGVD (321 aa). The segment at 1323–1475 is N-terminal hotdog fold; that stretch reads QQIVEQVFDT…SLTHLVRDRI (153 aa). The 312-residue stretch at 1323–1634 folds into the PKS/mFAS DH domain; it reads QQIVEQVFDT…FHRYRRILLE (312 aa). Residue His-1357 is the Proton acceptor; for dehydratase activity of the active site. Positions 1357–1631 are product template (PT) domain; sequence HRMNDCGVAT…GIEFHRYRRI (275 aa). The C-terminal hotdog fold stretch occupies residues 1487-1634; that stretch reads ANRLSHNMAY…FHRYRRILLE (148 aa). Residue Asp-1545 is the Proton donor; for dehydratase activity of the active site. The tract at residues 1644-1667 is disordered; the sequence is NLDDTTETKDISSSTQHSVPVSRQ. The span at 1654-1664 shows a compositional bias: polar residues; the sequence is ISSSTQHSVPV. The region spanning 1715–1789 is the Carrier domain; that stretch reads SSITNRAMQL…DLRNWLEETY (75 aa). An O-(pantetheine 4'-phosphoryl)serine modification is found at Ser-1749.

The catalysed reaction is holo-[ACP] + 8 malonyl-CoA + 8 H(+) = atrochrysone carboxyl-[ACP] + 8 CO2 + 8 CoA + 2 H2O. Its pathway is pigment biosynthesis. Non-reducing polyketide synthase; part of the gene cluster that mediates the biosynthesis of the bianthraquinone cladofulvin, a conidial pigment not required for virulence but that plays a role in fitness and resistance to environmental stresses including UV light and low-temperature stress. The pathway begins with the synthesis of atrochrysone thioester by the polyketide synthase (PKS) claG. The atrochrysone carboxyl ACP thioesterase claF then breaks the thioester bond and releases the atrochrysone carboxylic acid from claG. This compound is decarboxylated by claH to yield emodin, which is further converted to chrysophanol hydroquinone by the reductase claC and the dehydratase claB. The cytochrome P450 monooxygenase claM then catalyzes the dimerization of nataloe-emodin to cladofulvin. The sequence is that of Atrochrysone carboxylic acid synthase from Passalora fulva (Tomato leaf mold).